Here is a 365-residue protein sequence, read N- to C-terminus: Protein RecA (365 aa).

73-80 provides a ligand contact to ATP; the sequence is GPESSGKT.

This sequence belongs to the RecA family.

The protein localises to the cytoplasm. In terms of biological role, can catalyze the hydrolysis of ATP in the presence of single-stranded DNA, the ATP-dependent uptake of single-stranded DNA by duplex DNA, and the ATP-dependent hybridization of homologous single-stranded DNAs. It interacts with LexA causing its activation and leading to its autocatalytic cleavage. This Prochlorococcus marinus (strain AS9601) protein is Protein RecA.